Consider the following 502-residue polypeptide: ATP synthase subunit alpha, sodium ion specific (502 aa).

169 to 176 (GDRQTGKT) is an ATP binding site.

It belongs to the ATPase alpha/beta chains family. As to quaternary structure, F-type ATPases have 2 components, CF(1) - the catalytic core - and CF(0) - the membrane proton channel. CF(1) has five subunits: alpha(3), beta(3), gamma(1), delta(1), epsilon(1). CF(0) has three main subunits: a, b and c.

It is found in the cell membrane. The enzyme catalyses 4 Na(+)(in) + ATP + H2O = 4 Na(+)(out) + ADP + phosphate + H(+). Its activity is regulated as follows. Inhibited by nitrate. Its function is as follows. Produces ATP from ADP in the presence of a sodium ion gradient across the membrane. The alpha chain is a regulatory subunit. This Acetobacterium woodii (strain ATCC 29683 / DSM 1030 / JCM 2381 / KCTC 1655 / WB1) protein is ATP synthase subunit alpha, sodium ion specific.